The following is a 386-amino-acid chain: TGF-beta-activated kinase 1 and MAP3K7-binding protein 1 (386 aa).

Residues 22–327 form the PPM-type phosphatase domain; it reads HSCRYSKQKN…EEMTVIYVKL (306 aa).

In terms of assembly, interacts with mom-4; the interaction enhances mom-4 kinase activity.

Functionally, involved in the Wnt signaling pathway by regulating mom-4 kinase activity. The protein is TGF-beta-activated kinase 1 and MAP3K7-binding protein 1 of Caenorhabditis elegans.